Reading from the N-terminus, the 324-residue chain is Probable carboxylesterase 9 (324 aa).

Residues 86–88 carry the Involved in the stabilization of the negatively charged intermediate by the formation of the oxyanion hole motif; that stretch reads HGS. Catalysis depends on residues Ser-171, Asp-272, and His-302.

It belongs to the 'GDXG' lipolytic enzyme family. Expressed in flowers.

It carries out the reaction a carboxylic ester + H2O = an alcohol + a carboxylate + H(+). Its function is as follows. Carboxylesterase acting on esters with varying acyl chain length. The chain is Probable carboxylesterase 9 (CXE9) from Arabidopsis thaliana (Mouse-ear cress).